The primary structure comprises 104 residues: Probable quinol monooxygenase YgiN (104 aa).

The region spanning Leu-2–Leu-100 is the ABM domain.

Homodimer.

It carries out the reaction menadiol + 2 O2 = menadione + 2 superoxide + 2 H(+). Its function is as follows. Can oxidize menadiol to menadione. In Escherichia coli O157:H7, this protein is Probable quinol monooxygenase YgiN (ygiN).